The primary structure comprises 365 residues: Neutral protease 2 homolog mep20 (365 aa).

Positions 1 to 19 (MKVTILASAILALINGALA) are cleaved as a signal peptide. Positions 20-172 (LPANTPTLDV…PQAIKLLDRR (153 aa)) are excised as a propeptide. N-linked (GlcNAc...) asparagine glycosylation occurs at asparagine 73. 2 disulfides stabilise this stretch: cysteine 178/cysteine 249 and cysteine 256/cysteine 274. Zn(2+) is bound at residue histidine 299. Residue glutamate 300 is part of the active site. Zn(2+) is bound by residues histidine 303 and aspartate 314. Asparagine 351 is a glycosylation site (N-linked (GlcNAc...) asparagine).

It belongs to the peptidase M35 family. The cofactor is Zn(2+).

Its subcellular location is the secreted. It carries out the reaction Preferential cleavage of bonds with hydrophobic residues in P1'. Also 3-Asn-|-Gln-4 and 8-Gly-|-Ser-9 bonds in insulin B chain.. Its function is as follows. Secreted metalloproteinase that allows assimilation of proteinaceous substrates. Shows high activities on basic nuclear substrates such as histone and protamine. May be involved in virulence. The polypeptide is Neutral protease 2 homolog mep20 (mep20) (Aspergillus fumigatus (Neosartorya fumigata)).